The chain runs to 290 residues: 4-hydroxy-tetrahydrodipicolinate synthase (290 aa).

T46 serves as a coordination point for pyruvate. The Proton donor/acceptor role is filled by Y134. The active-site Schiff-base intermediate with substrate is K163. Pyruvate is bound at residue V205.

It belongs to the DapA family. Homotetramer; dimer of dimers.

Its subcellular location is the cytoplasm. It carries out the reaction L-aspartate 4-semialdehyde + pyruvate = (2S,4S)-4-hydroxy-2,3,4,5-tetrahydrodipicolinate + H2O + H(+). It functions in the pathway amino-acid biosynthesis; L-lysine biosynthesis via DAP pathway; (S)-tetrahydrodipicolinate from L-aspartate: step 3/4. Catalyzes the condensation of (S)-aspartate-beta-semialdehyde [(S)-ASA] and pyruvate to 4-hydroxy-tetrahydrodipicolinate (HTPA). This is 4-hydroxy-tetrahydrodipicolinate synthase from Bacillus subtilis (strain 168).